Here is a 213-residue protein sequence, read N- to C-terminus: Cytidylate kinase (213 aa).

7–15 lines the ATP pocket; sequence GPAASGKGT.

This sequence belongs to the cytidylate kinase family. Type 1 subfamily.

It localises to the cytoplasm. It catalyses the reaction CMP + ATP = CDP + ADP. The enzyme catalyses dCMP + ATP = dCDP + ADP. In Rhodospirillum rubrum (strain ATCC 11170 / ATH 1.1.1 / DSM 467 / LMG 4362 / NCIMB 8255 / S1), this protein is Cytidylate kinase.